Reading from the N-terminus, the 295-residue chain is Nucleotide-binding protein EF_0766 (295 aa).

12–19 (GMSGAGKT) serves as a coordination point for ATP. GTP is bound at residue 62–65 (DLRS).

It belongs to the RapZ-like family.

Its function is as follows. Displays ATPase and GTPase activities. The protein is Nucleotide-binding protein EF_0766 of Enterococcus faecalis (strain ATCC 700802 / V583).